Consider the following 301-residue polypeptide: Probable alpha-L-glutamate ligase (301 aa).

In terms of domain architecture, ATP-grasp spans 104–287 (LQLLSRRGIG…VAGMIIEYLE (184 aa)). ATP-binding positions include Lys-141, 178 to 179 (EY), Asp-187, and 211 to 213 (RSN). Residues Asp-248, Glu-260, and Asn-262 each coordinate Mg(2+). Mn(2+) is bound by residues Asp-248, Glu-260, and Asn-262.

This sequence belongs to the RimK family. It depends on Mg(2+) as a cofactor. Requires Mn(2+) as cofactor.

This Pseudomonas savastanoi pv. phaseolicola (strain 1448A / Race 6) (Pseudomonas syringae pv. phaseolicola (strain 1448A / Race 6)) protein is Probable alpha-L-glutamate ligase.